The following is a 64-amino-acid chain: Alpha-mammal toxin AnCra1 (64 aa).

The LCN-type CS-alpha/beta domain occupies 2 to 64; sequence KDGYIVDDVN…VRTKGPGRCN (63 aa). Cystine bridges form between C12-C63, C16-C36, C22-C46, and C26-C48.

The protein belongs to the long (4 C-C) scorpion toxin superfamily. Sodium channel inhibitor family. Alpha subfamily. In terms of tissue distribution, expressed by the venom gland.

It localises to the secreted. Functionally, alpha toxins bind voltage-independently at site-3 of sodium channels (Nav) and inhibit the inactivation of the activated channels, thereby blocking neuronal transmission. This toxin is active against mammals. The recombinant toxin selectively inhibits the fast inactivation of hNav1.7/SCN9A channel (EC(50)=136.7 nM). Is potent in inhibiting the fast inactivation of hNav1.7 and has little effect on the steady-state inactivation. In vivo, intravenous injection into mice induces muscle contraction, leading to severe paralysis and death. The polypeptide is Alpha-mammal toxin AnCra1 (Androctonus crassicauda (Arabian fat-tailed scorpion)).